We begin with the raw amino-acid sequence, 415 residues long: Transcription factor gsfR2 (415 aa).

A DNA-binding region (zn(2)-C6 fungal-type) is located at residues 9-36 (CITCVQSKRKCDQGLPKCQRCLAKNIHC). The interval 65 to 91 (AEEPSRGCQLQRSPARPTSPTHSPHAN) is disordered. Residues 72–88 (CQLQRSPARPTSPTHSP) show a composition bias toward polar residues.

It is found in the nucleus. In terms of biological role, transcription factor that regulates expression of the gene cluster that mediates the biosynthesis of Griseofulvin, an important antifungal drug that has been in use for a long time for treating dermatophyte infections. This Penicillium aethiopicum protein is Transcription factor gsfR2.